The primary structure comprises 643 residues: Phosphomethylpyrimidine synthase (643 aa).

Substrate contacts are provided by residues Asn-248, Met-277, Tyr-306, His-342, 362–364, 403–406, and Glu-442; these read SRG and DGLR. A Zn(2+)-binding site is contributed by His-446. Residue Tyr-469 participates in substrate binding. His-510 serves as a coordination point for Zn(2+). [4Fe-4S] cluster contacts are provided by Cys-590, Cys-593, and Cys-598.

The protein belongs to the ThiC family. As to quaternary structure, homodimer. It depends on [4Fe-4S] cluster as a cofactor.

The enzyme catalyses 5-amino-1-(5-phospho-beta-D-ribosyl)imidazole + S-adenosyl-L-methionine = 4-amino-2-methyl-5-(phosphooxymethyl)pyrimidine + CO + 5'-deoxyadenosine + formate + L-methionine + 3 H(+). It functions in the pathway cofactor biosynthesis; thiamine diphosphate biosynthesis. Catalyzes the synthesis of the hydroxymethylpyrimidine phosphate (HMP-P) moiety of thiamine from aminoimidazole ribotide (AIR) in a radical S-adenosyl-L-methionine (SAM)-dependent reaction. The sequence is that of Phosphomethylpyrimidine synthase from Burkholderia pseudomallei (strain 1106a).